We begin with the raw amino-acid sequence, 455 residues long: N(6)-adenosine-methyltransferase non-catalytic subunit METTL14 (455 aa).

Residues 21–96 form a disordered region; sequence QQLGAESPDS…QHQEESGPYE (76 aa). Residues 37-51 show a composition bias toward basic and acidic residues; it reads SKDEQKEIEETRETC. Over residues 69-82 the composition is skewed to acidic residues; sequence EGEDPEEDVEEQKE. Interaction with METTL3 stretches follow at residues 134-135 and 236-237; these read RD and SG. Residues 244-253 form a positively charged region required for RNA-binding region; sequence RMCLRKWGFR. Interaction with METTL3 stretches follow at residues 254–257 and 277–286; these read RCED and KAVFQRTKEH. The positively charged region required for RNA-binding stretch occupies residues 296–297; that stretch reads RR. Residues 307-311 form an interaction with METTL3 region; sequence NVDID. A disordered region spans residues 392–455; it reads ERLRPKSPPP…GGPHRGFPPR (64 aa). The segment covering 407-421 has biased composition (gly residues); it reads RGGGAPRGGRGGPAA. Residues 423–441 show a composition bias toward basic and acidic residues; it reads RGDRGRERNRPNFRGDRGG.

It belongs to the MT-A70-like family. In terms of assembly, heterodimer; heterodimerizes with mettl3 to form an antiparallel heterodimer that constitutes an active methyltransferase. Component of the WMM complex, a N6-methyltransferase complex composed of a catalytic subcomplex, named MAC, and of an associated subcomplex, named MACOM. The MAC subcomplex is composed of mettl3 and mettl14.

It is found in the nucleus. In terms of biological role, the METTL3-METTL14 heterodimer forms a N6-methyltransferase complex that methylates adenosine residues at the N(6) position of some mRNAs and regulates the circadian clock, differentiation of embryonic stem cells and cortical neurogenesis. In the heterodimer formed with mettl3, mettl14 constitutes the RNA-binding scaffold that recognizes the substrate rather than the catalytic core. N6-methyladenosine (m6A), which takes place at the 5'-[AG]GAC-3' consensus sites of some mRNAs, plays a role in mRNA stability and processing. This chain is N(6)-adenosine-methyltransferase non-catalytic subunit METTL14 (mettl14), found in Danio rerio (Zebrafish).